The chain runs to 199 residues: Outer dense fiber protein 4 (199 aa).

Residues 1–14 (MNIRSLERAGRAGK) are compositionally biased toward basic and acidic residues. Positions 1 to 25 (MNIRSLERAGRAGKQDGVAVSPGQE) are disordered. Ser-53 carries the post-translational modification Phosphoserine. The next 3 membrane-spanning stretches (helical) occupy residues 68-88 (IAQV…VVMV), 109-128 (VTTK…LHIY), and 159-179 (LALG…IPGL).

Its subcellular location is the membrane. Component of the outer dense fibers (ODF) of spermatozoa which could be involved in sperm tail structure, sperm movement and general organization of cellular cytoskeleton. The protein is Outer dense fiber protein 4 (ODF4) of Bos taurus (Bovine).